Consider the following 160-residue polypeptide: Cytochrome b6-f complex subunit 4 (160 aa).

The next 3 helical transmembrane spans lie at 36 to 56 (LLYI…GLSV), 95 to 115 (LLGV…PFIE), and 131 to 151 (TVFL…ALPI).

The protein belongs to the cytochrome b family. PetD subfamily. The 4 large subunits of the cytochrome b6-f complex are cytochrome b6, subunit IV (17 kDa polypeptide, petD), cytochrome f and the Rieske protein, while the 4 small subunits are petG, petL, petM and petN. The complex functions as a dimer.

The protein localises to the plastid. Its subcellular location is the chloroplast thylakoid membrane. Its function is as follows. Component of the cytochrome b6-f complex, which mediates electron transfer between photosystem II (PSII) and photosystem I (PSI), cyclic electron flow around PSI, and state transitions. In Chaetosphaeridium globosum (Charophycean green alga), this protein is Cytochrome b6-f complex subunit 4.